The sequence spans 267 residues: Apolipoprotein A-I (267 aa).

An N-terminal signal peptide occupies residues M1–A18. 2 tandem repeats follow at residues L68–G89 and P90–S111. The segment at L68–Q267 is 10 X approximate tandem repeats. Methionine sulfoxide is present on M110. Residues K112 to Q122 form a 3; half-length repeat. 5 repeat units span residues P123–E144, P145–S166, P167–A188, P189–G210, and A211–K232. A 9; half-length repeat occupies P233–L243. Repeat unit 10 spans residues P244–Q267.

This sequence belongs to the apolipoprotein A1/A4/E family. In terms of assembly, homodimer. Interacts with APOA1BP and CLU. Component of a sperm activating protein complex (SPAP), consisting of APOA1, an immunoglobulin heavy chain, an immunoglobulin light chain and albumin. Interacts with NDRG1. Interacts with SCGB3A2. Interacts with NAXE and YJEFN3. In terms of processing, glycosylated. Palmitoylated. Post-translationally, phosphorylation sites are present in the extracellular medium.

It is found in the secreted. Its function is as follows. Participates in the reverse transport of cholesterol from tissues to the liver for excretion by promoting cholesterol efflux from tissues and by acting as a cofactor for the lecithin cholesterol acyltransferase (LCAT). As part of the SPAP complex, activates spermatozoa motility. The polypeptide is Apolipoprotein A-I (APOA1) (Cebus imitator (Panamanian white-faced capuchin)).